The sequence spans 267 residues: Phosphoinositide-3-kinase-interacting protein 1 (267 aa).

Residues 1 to 21 form the signal peptide; the sequence is MLLAWVHTFLLSNMLLAEAYG. The Extracellular portion of the chain corresponds to 22–172; the sequence is SGGCFWDNGH…NSKEKKDLGT (151 aa). Residues 24–101 enclose the Kringle domain; it reads GCFWDNGHLY…EKRPCEDLRC (78 aa). Cystine bridges form between C25-C101, C46-C82, and C70-C96. Over residues 91–101 the composition is skewed to basic and acidic residues; the sequence is PEKRPCEDLRC. A disordered region spans residues 91–122; that stretch reads PEKRPCEDLRCPETTSQAPPPPPPSSTTELEE. Residues 173 to 193 traverse the membrane as a helical segment; that stretch reads LGYVLGVTMTVIIIAIGVGIV. Residues 194–267 are Cytoplasmic-facing; the sequence is LGYTYKRGKD…LTDQAGTPGA (74 aa).

It localises to the cell membrane. Negative regulator of hepatic phosphatidylinositol 3-kinase (PI3K) activity. The chain is Phosphoinositide-3-kinase-interacting protein 1 (Pik3ip1) from Rattus norvegicus (Rat).